Reading from the N-terminus, the 156-residue chain is ATP synthase subunit b (156 aa).

The chain crosses the membrane as a helical span at residues 11–31; sequence AIAFILFVWFCMKYVWPPLMA.

This sequence belongs to the ATPase B chain family. As to quaternary structure, F-type ATPases have 2 components, F(1) - the catalytic core - and F(0) - the membrane proton channel. F(1) has five subunits: alpha(3), beta(3), gamma(1), delta(1), epsilon(1). F(0) has three main subunits: a(1), b(2) and c(10-14). The alpha and beta chains form an alternating ring which encloses part of the gamma chain. F(1) is attached to F(0) by a central stalk formed by the gamma and epsilon chains, while a peripheral stalk is formed by the delta and b chains.

It is found in the cell inner membrane. Its function is as follows. F(1)F(0) ATP synthase produces ATP from ADP in the presence of a proton or sodium gradient. F-type ATPases consist of two structural domains, F(1) containing the extramembraneous catalytic core and F(0) containing the membrane proton channel, linked together by a central stalk and a peripheral stalk. During catalysis, ATP synthesis in the catalytic domain of F(1) is coupled via a rotary mechanism of the central stalk subunits to proton translocation. Component of the F(0) channel, it forms part of the peripheral stalk, linking F(1) to F(0). The chain is ATP synthase subunit b from Salmonella agona (strain SL483).